We begin with the raw amino-acid sequence, 366 residues long: tRNA/tmRNA (uracil-C(5))-methyltransferase (366 aa).

S-adenosyl-L-methionine is bound by residues Gln-189, Tyr-217, Asn-222, Glu-238, and Asp-298. The active-site Nucleophile is the Cys-323. Glu-357 acts as the Proton acceptor in catalysis.

This sequence belongs to the class I-like SAM-binding methyltransferase superfamily. RNA M5U methyltransferase family. TrmA subfamily.

The enzyme catalyses uridine(54) in tRNA + S-adenosyl-L-methionine = 5-methyluridine(54) in tRNA + S-adenosyl-L-homocysteine + H(+). The catalysed reaction is uridine(341) in tmRNA + S-adenosyl-L-methionine = 5-methyluridine(341) in tmRNA + S-adenosyl-L-homocysteine + H(+). Functionally, dual-specificity methyltransferase that catalyzes the formation of 5-methyluridine at position 54 (m5U54) in all tRNAs, and that of position 341 (m5U341) in tmRNA (transfer-mRNA). This is tRNA/tmRNA (uracil-C(5))-methyltransferase from Shewanella oneidensis (strain ATCC 700550 / JCM 31522 / CIP 106686 / LMG 19005 / NCIMB 14063 / MR-1).